Consider the following 158-residue polypeptide: NADH-quinone oxidoreductase subunit B (158 aa).

4 residues coordinate [4Fe-4S] cluster: cysteine 37, cysteine 38, cysteine 102, and cysteine 132.

The protein belongs to the complex I 20 kDa subunit family. In terms of assembly, NDH-1 is composed of 14 different subunits. Subunits NuoB, C, D, E, F, and G constitute the peripheral sector of the complex. It depends on [4Fe-4S] cluster as a cofactor.

Its subcellular location is the cell inner membrane. It catalyses the reaction a quinone + NADH + 5 H(+)(in) = a quinol + NAD(+) + 4 H(+)(out). In terms of biological role, NDH-1 shuttles electrons from NADH, via FMN and iron-sulfur (Fe-S) centers, to quinones in the respiratory chain. Couples the redox reaction to proton translocation (for every two electrons transferred, four hydrogen ions are translocated across the cytoplasmic membrane), and thus conserves the redox energy in a proton gradient. In Legionella pneumophila (strain Corby), this protein is NADH-quinone oxidoreductase subunit B.